The sequence spans 43 residues: Thymosin beta-b (43 aa).

2 stretches are compositionally biased toward basic and acidic residues: residues Met-1–Glu-25 and Glu-33–Ala-43. The tract at residues Met-1–Ala-43 is disordered.

Belongs to the thymosin beta family.

It localises to the cytoplasm. Its subcellular location is the cytoskeleton. Its function is as follows. Plays an important role in the organization of the cytoskeleton. Binds to and sequesters actin monomers (G actin) and therefore inhibits actin polymerization. This Cyprinus carpio (Common carp) protein is Thymosin beta-b.